Here is a 436-residue protein sequence, read N- to C-terminus: Protein FAM83A (436 aa).

The segment at 1–298 is DUF1669; sequence MSRSRHVGKI…LYASSKPLMG (298 aa). Residues 73–95 form a disordered region; it reads AQAKEPPDAPDSAGGAESGPRGL. Phosphoserine occurs at positions 301, 329, 350, and 359. Residues 302 to 371 are disordered; the sequence is PRLVAPFQPN…APIPPTVPRL (70 aa). Positions 321–349 are enriched in polar residues; sequence LSGTSDSASDRTSSNPFSSLSTGSNAHNQ. A compositionally biased stretch (low complexity) spans 350–359; that stretch reads SLSTSSGPSS.

This sequence belongs to the FAM83 family. In terms of assembly, directly interacts (via DUF1669) with casein kinase isoforms CSNK1A1, CSNK1A1L, CSNK1D and CSNK1E. In terms of processing, may be phosphorylated upon EGFR activation. Widely expressed, with relatively higher expression levels in adipose tissues, especially in epididymal and inguinal white adipose tissue (at protein level).

It localises to the cytoplasm. The protein resides in the mitochondrion. Involved in mitochondrial maintenance during adipogenesis. May be acting by playing a role in the maintenance of normal mitochondrial function. This is Protein FAM83A from Mus musculus (Mouse).